Consider the following 766-residue polypeptide: Dolichyl pyrophosphate Glc1Man9GlcNAc2 alpha-1,3-glucosyltransferase (766 aa).

12 helical membrane-spanning segments follow: residues Leu-6–Val-26, Tyr-60–Phe-80, Ile-96–Ala-116, Ser-156–Ile-176, Ile-190–Leu-210, Ala-228–His-248, Pro-324–Ile-344, Ala-350–Val-370, Ile-395–Phe-415, Ile-423–Leu-443, Val-452–Leu-472, and Leu-482–Trp-502.

The protein belongs to the ALG6/ALG8 glucosyltransferase family.

It is found in the endoplasmic reticulum membrane. The enzyme catalyses an alpha-D-Glc-(1-&gt;3)-alpha-D-Man-(1-&gt;2)-alpha-D-Man-(1-&gt;2)-alpha-D-Man-(1-&gt;3)-[alpha-D-Man-(1-&gt;2)-alpha-D-Man-(1-&gt;3)-[alpha-D-Man-(1-&gt;2)-alpha-D-Man-(1-&gt;6)]-alpha-D-Man-(1-&gt;6)]-beta-D-Man-(1-&gt;4)-beta-D-GlcNAc-(1-&gt;4)-alpha-D-GlcNAc-diphospho-di-trans,poly-cis-dolichol + a di-trans,poly-cis-dolichyl beta-D-glucosyl phosphate = an alpha-D-Glc-(1-&gt;3)-alpha-D-Glc-(1-&gt;3)-alpha-D-Man-(1-&gt;2)-alpha-D-Man-(1-&gt;2)-alpha-D-Man-(1-&gt;3)-[alpha-D-Man-(1-&gt;2)-alpha-D-Man-(1-&gt;3)-[alpha-D-Man-(1-&gt;2)-alpha-D-Man-(1-&gt;6)]-alpha-D-Man-(1-&gt;6)]-beta-D-Man-(1-&gt;4)-beta-D-GlcNAc-(1-&gt;4)-alpha-D-GlcNAc-diphospho-di-trans,poly-cis-dolichol + a di-trans,poly-cis-dolichyl phosphate + H(+). It participates in protein modification; protein glycosylation. In terms of biological role, dolichyl pyrophosphate Glc1Man9GlcNAc2 alpha-1,3-glucosyltransferase that operates in the biosynthetic pathway of dolichol-linked oligosaccharides, the glycan precursors employed in protein asparagine (N)-glycosylation. The assembly of dolichol-linked oligosaccharides begins on the cytosolic side of the endoplasmic reticulum membrane and finishes in its lumen. The sequential addition of sugars to dolichol pyrophosphate produces dolichol-linked oligosaccharides containing fourteen sugars, including two GlcNAcs, nine mannoses and three glucoses. Once assembled, the oligosaccharide is transferred from the lipid to nascent proteins by oligosaccharyltransferases. In the lumen of the endoplasmic reticulum, adds the second glucose residue from dolichyl phosphate glucose (Dol-P-Glc) onto the lipid-linked oligosaccharide intermediate Glc(1)Man(9)GlcNAc(2)-PP-Dol to produce Glc(2)Man(9)GlcNAc(2)-PP-Dol. This is Dolichyl pyrophosphate Glc1Man9GlcNAc2 alpha-1,3-glucosyltransferase from Caenorhabditis elegans.